We begin with the raw amino-acid sequence, 132 residues long: Small ribosomal subunit protein uS8 (132 aa).

This sequence belongs to the universal ribosomal protein uS8 family. In terms of assembly, part of the 30S ribosomal subunit. Contacts proteins S5 and S12.

Its function is as follows. One of the primary rRNA binding proteins, it binds directly to 16S rRNA central domain where it helps coordinate assembly of the platform of the 30S subunit. The protein is Small ribosomal subunit protein uS8 of Corynebacterium efficiens (strain DSM 44549 / YS-314 / AJ 12310 / JCM 11189 / NBRC 100395).